Here is a 269-residue protein sequence, read N- to C-terminus: Type II iodothyronine deiodinase (269 aa).

Topologically, residues 1–9 (MGILSVDLL) are lumenal. A helical; Signal-anchor for type III membrane protein membrane pass occupies residues 10-34 (ITLQILPVFFSNCLFLALYDSVILL). At 35-269 (KHVVLLLSRS…KNFSKRUKKT (235 aa)) the chain is on the cytoplasmic side. Sec-133 is a catalytic residue. Residues Sec-133 and Sec-266 are each a non-standard amino acid (selenocysteine).

This sequence belongs to the iodothyronine deiodinase family. Predominantly monomer. Can form homodimers but homodimerization is not essential for enzyme activity. Interacts with USP20 and USP33. Interacts with MARCHF6. Post-translationally, ubiquitinated by MARCHF6, leading to its degradation by the proteasome. Deubiquitinated by USP20 and USP33. In terms of tissue distribution, more expressed in pituitary than in brain, low to undetectable levels in thyroid and skeletal muscle.

It is found in the endoplasmic reticulum membrane. It carries out the reaction 3,3',5-triiodo-L-thyronine + iodide + A + H(+) = L-thyroxine + AH2. The catalysed reaction is 3,3'-diiodo-L-thyronine + iodide + A + H(+) = 3,3',5'-triiodo-L-thyronine + AH2. It catalyses the reaction 3'-iodo-L-thyronine + iodide + A + H(+) = 3',5'-diiodo-L-thyronine + AH2. The enzyme catalyses 3,3'-diiodothyronamine + iodide + A + H(+) = 3,3',5'-triiodothyronamine + AH2. It carries out the reaction 3'-iodothyronamine + iodide + A + H(+) = 3',5'-diiodothyronamine + AH2. In terms of biological role, plays a crucial role in the metabolism of thyroid hormones (TH) and has specific roles in TH activation and inactivation by deiodination.Catalyzes the deiodination of L-thyroxine (T4) to 3,5,3'-triiodothyronine (T3) and 3,3',5'-triiodothyronine (rT3) to 3,3'-diiodothyronine (3,3'-T2) via outer-ring deiodination (ORD). Catalyzes the deiodination of 3',5'-diiodothyronine (3',5'-T2) to 3'-monoiodothyronine (3'-T1) via ORD. Catalyzes the phenolic ring deiodinations of 3,3',5'-triiodothyronamine and 3',5'- diiodothyronamine. In Sus scrofa (Pig), this protein is Type II iodothyronine deiodinase (DIO2).